We begin with the raw amino-acid sequence, 356 residues long: 3-dehydroquinate synthase (356 aa).

NAD(+) is bound by residues 69–74, 103–107, 127–128, lysine 140, lysine 149, and 167–170; these read DGEKFK, GVIGD, TT, and CLKT. 3 residues coordinate Zn(2+): glutamate 182, histidine 245, and histidine 262.

The protein belongs to the sugar phosphate cyclases superfamily. Dehydroquinate synthase family. Co(2+) is required as a cofactor. The cofactor is Zn(2+). It depends on NAD(+) as a cofactor.

It localises to the cytoplasm. The catalysed reaction is 7-phospho-2-dehydro-3-deoxy-D-arabino-heptonate = 3-dehydroquinate + phosphate. The protein operates within metabolic intermediate biosynthesis; chorismate biosynthesis; chorismate from D-erythrose 4-phosphate and phosphoenolpyruvate: step 2/7. Its function is as follows. Catalyzes the conversion of 3-deoxy-D-arabino-heptulosonate 7-phosphate (DAHP) to dehydroquinate (DHQ). This Psychromonas ingrahamii (strain DSM 17664 / CCUG 51855 / 37) protein is 3-dehydroquinate synthase.